Consider the following 142-residue polypeptide: gSG7 salivary protein (142 aa).

The first 26 residues, 1–26 (MAVRMTVILPLAMALICLMQAEPATA), serve as a signal peptide directing secretion. 2 disulfide bridges follow: Cys-84-Cys-139 and Cys-107-Cys-117.

In terms of assembly, associates with activated host C3-convertase complex C3bBb (C3-CFB). Interacts with host properdin (CFP), a regulator of the alternate pathway of complement. Female salivary gland (at protein level).

It localises to the secreted. In terms of biological role, salivary protein that potently inhibits the alternative pathway of complement system activation in the host while having no inhibitory effect on the classical or lectin pathways. Binds and stabilizes activated host C3-convertase complex C3bBb (C3-CFB) and inhibits its convertase activity. Enhances accumulation of C3bBb on immobilized properdin. The protein is gSG7 salivary protein of Anopheles albimanus (New world malaria mosquito).